A 53-amino-acid chain; its full sequence is Gene 87 protein (53 aa).

The chain is Gene 87 protein (87) from Mycobacterium phage L5 (Mycobacteriophage L5).